The following is a 443-amino-acid chain: Nuclear pore complex-interacting protein family member B15 (443 aa).

The signal sequence occupies residues 1-18 (MRLRFWLLIWLLLGFISH). A glycan (N-linked (GlcNAc...) asparagine) is linked at Asn111. 2 disordered regions span residues 242–262 (RMGR…NSLS) and 330–413 (SPLP…TRHC). Residues 252–262 (QQHSITDNSLS) show a composition bias toward polar residues. The span at 351-393 (EAEKPPKPKRWRVDEVEQSPKPKRRRADEVEQSPKPKRQREAE) shows a compositional bias: basic and acidic residues. The segment covering 399-412 (KPKRRRLSKLRTRH) has biased composition (basic residues).

It belongs to the NPIP family.

The protein localises to the secreted. The chain is Nuclear pore complex-interacting protein family member B15 (NPIPB15) from Homo sapiens (Human).